A 227-amino-acid chain; its full sequence is Charged multivesicular body protein 4b (227 aa).

Disordered stretches follow at residues 1–26 (MSGILGKLFGAGAGGKGAGKGPSPQE) and 186–227 (SGPE…AGNM). The segment covering 9–20 (FGAGAGGKGAGK) has biased composition (gly residues). Positions 25-185 (QEAIQRLRDT…EELDKNLLEI (161 aa)) form a coiled coil.

This sequence belongs to the SNF7 family. As to quaternary structure, probable core component of the endosomal sorting required for transport complex III (ESCRT-III). ESCRT-III components are thought to multimerize to form a flat lattice on the perimeter membrane of the endosome.

Its subcellular location is the cytoplasm. It localises to the cytosol. It is found in the late endosome membrane. The protein resides in the midbody. Its function is as follows. Probable core component of the endosomal sorting required for transport complex III (ESCRT-III) which is involved in multivesicular bodies (MVBs) formation and sorting of endosomal cargo proteins into MVBs. MVBs contain intraluminal vesicles (ILVs) that are generated by invagination and scission from the limiting membrane of the endosome and mostly are delivered to lysosomes enabling degradation of membrane proteins, such as stimulated growth factor receptors, lysosomal enzymes and lipids. The chain is Charged multivesicular body protein 4b (CHMP4B) from Gallus gallus (Chicken).